We begin with the raw amino-acid sequence, 227 residues long: Ribonuclease 3 (227 aa).

Positions 4-133 constitute an RNase III domain; the sequence is FETLEKLLSY…LIAAIYLDSN (130 aa). A Mg(2+)-binding site is contributed by E46. The active site involves D50. Residues N119 and E122 each contribute to the Mg(2+) site. The active site involves E122. A DRBM domain is found at 158-226; it reads DPKTALQEWA…ARSLLHRLKN (69 aa).

This sequence belongs to the ribonuclease III family. As to quaternary structure, homodimer. Mg(2+) serves as cofactor.

Its subcellular location is the cytoplasm. It catalyses the reaction Endonucleolytic cleavage to 5'-phosphomonoester.. In terms of biological role, digests double-stranded RNA. Involved in the processing of primary rRNA transcript to yield the immediate precursors to the large and small rRNAs (23S and 16S). Processes some mRNAs, and tRNAs when they are encoded in the rRNA operon. Processes pre-crRNA and tracrRNA of type II CRISPR loci if present in the organism. In Rickettsia massiliae (strain Mtu5), this protein is Ribonuclease 3.